Here is a 444-residue protein sequence, read N- to C-terminus: Serine carboxypeptidase-like 50 (444 aa).

The first 22 residues, 1-22, serve as a signal peptide directing secretion; sequence MEQATTLFILLSTLLLAVSVES. An intrachain disulfide couples cysteine 79 to cysteine 308. Serine 170 is a catalytic residue. A glycan (N-linked (GlcNAc...) asparagine) is linked at asparagine 263. Residue aspartate 345 is part of the active site. An N-linked (GlcNAc...) asparagine glycan is attached at asparagine 361. Histidine 403 is a catalytic residue.

Belongs to the peptidase S10 family. As to expression, ubiquitous.

The protein localises to the secreted. In terms of biological role, probable carboxypeptidase. The polypeptide is Serine carboxypeptidase-like 50 (SCPL50) (Arabidopsis thaliana (Mouse-ear cress)).